The primary structure comprises 436 residues: IIDVHEIDQIMTCSVWLKQVWIDKKLSWNPEIYGGVSVLYVPYEMVWVPDIVLYNTVDSNYNITISTKATLRYDGQVTWDSPAIFKTLCQIDVRWFPFDEQNCHFKFGSWTYTEDLLNLELLDSDARYELEMNENGELNNITIFEEGIDLSDYYPSVEWDIMSRIAKRRTKNYLTSFSDEAFIDIIFYLELRRKPLFYTVNLVFPCVGISFLTIVAFYLPPRSGEKVTLCILILVALTVFYLLLKDIIPATSIALPLFGKYLLFTMIMVSLSVLVTVISLNLHFRRPSTHRMPIWVKWLFLRILPKILFMRRPTLIKVDEAVRRVADYRRGYNMIINRYEQKVNCDSCRNVNKRITQEIQKIYRSPHVIKAFENVCFIAQLLKKKDREAMIDEDWKFVARVLDRLFLLLFSIACFLGTILILFQAPSLYDTRQAIN.

Residues 1–195 (IIDVHEIDQI…IFYLELRRKP (195 aa)) lie on the Extracellular side of the membrane. Residue Asn62 is glycosylated (N-linked (GlcNAc...) asparagine). A disulfide bond links Cys89 and Cys103. An N-linked (GlcNAc...) asparagine glycan is attached at Asn140. 3 helical membrane passes run 196 to 219 (LFYT…AFYL), 227 to 245 (VTLC…LLLK), and 261 to 280 (YLLF…VISL). Topologically, residues 281-404 (NLHFRRPSTH…WKFVARVLDR (124 aa)) are cytoplasmic. Residues 405–423 (LFLLLFSIACFLGTILILF) traverse the membrane as a helical segment.

The protein belongs to the ligand-gated ion channel (TC 1.A.9) family. Acetylcholine receptor (TC 1.A.9.1) subfamily.

The protein resides in the postsynaptic cell membrane. It localises to the cell membrane. After binding acetylcholine, the AChR responds by an extensive change in conformation that affects all subunits and leads to opening of an ion-conducting channel across the plasma membrane. The chain is Acetylcholine receptor non-alpha chain from Onchocerca volvulus.